A 352-amino-acid polypeptide reads, in one-letter code: Phosphate acyltransferase (352 aa).

Residues 328–339 are compositionally biased toward basic and acidic residues; that stretch reads ESFPGDAREREG. The disordered stretch occupies residues 328 to 352; that stretch reads ESFPGDAREREGAPAPDAGTERVAS.

This sequence belongs to the PlsX family. Homodimer. Probably interacts with PlsY.

It localises to the cytoplasm. It carries out the reaction a fatty acyl-[ACP] + phosphate = an acyl phosphate + holo-[ACP]. It functions in the pathway lipid metabolism; phospholipid metabolism. Its function is as follows. Catalyzes the reversible formation of acyl-phosphate (acyl-PO(4)) from acyl-[acyl-carrier-protein] (acyl-ACP). This enzyme utilizes acyl-ACP as fatty acyl donor, but not acyl-CoA. In Citrifermentans bemidjiense (strain ATCC BAA-1014 / DSM 16622 / JCM 12645 / Bem) (Geobacter bemidjiensis), this protein is Phosphate acyltransferase.